A 250-amino-acid polypeptide reads, in one-letter code: TBC1 domain family member 26 (250 aa).

A Rab-GAP TBC domain is found at 101-250; that stretch reads VIPLAVRGRA…RCCTSPSQRS (150 aa).

In terms of biological role, may act as a GTPase-activating protein for Rab family protein(s). This chain is TBC1 domain family member 26 (TBC1D26), found in Homo sapiens (Human).